Reading from the N-terminus, the 206-residue chain is MVRPRSGIVLVLCAPSGTGKTTLTRRLLEEFPRFAFSVSYTTRQPRAGEEHGREYNFVDEETFIRLRDEGFFAEWAEVHGNFYGTPLEDTRQLLARGRDVLFDIDVQGAAQLRGSLKQGCYVFILPPSGAELERRLRARGTDPEDTIRRRLANARRELQQAHWFNAWIVNDNLEQAYDELRAAYLAATLSPTCRPELVDELLQDWR.

The Guanylate kinase-like domain occupies 7 to 185 (GIVLVLCAPS…AYDELRAAYL (179 aa)). 14–21 (APSGTGKT) serves as a coordination point for ATP.

It belongs to the guanylate kinase family.

The protein localises to the cytoplasm. It carries out the reaction GMP + ATP = GDP + ADP. Its function is as follows. Essential for recycling GMP and indirectly, cGMP. The sequence is that of Guanylate kinase from Oleidesulfovibrio alaskensis (strain ATCC BAA-1058 / DSM 17464 / G20) (Desulfovibrio alaskensis).